The following is a 501-amino-acid chain: MTNYFPWLTIIVLLPIFAGSLIFFLPHRGNKVIRWYTICICSLELLLTTYTFCYHFQLNDPLTQLTEDYKWINFFDFYWRLGIDGLSIGPILLTGFITTLATLAARPVTRDSRLFHFLMLAMYSGQIGSFSSRDLLLFFIMWELELIPVYLLLAMWGGKKRLYSATKFILYTAGGSIFLLIGVLGIGLYGSNEPTLNLETLSNQSYPVALEIILYIGFLIAFSVKLPIIPLHTWLPDTHGEAHYSTCMLLAGILLKMGAYGLVRINMELLPHAHSIFSPWLIIVGAIQIIYAALTSPGQRNLKKRIAYSSVSHMGFIIIGIGSITDTGLNGAILQIISHGFIGAALFFLAGTSYDRIRLVYLDEMGGMAIHLPKIFTIFSILSMASLALPGMSGFLAELIVFFGIITSHQYLLMPKILITFVMAIGMILTPIYLLSMLRQMFYGYKLFNVPNSYFLDFGPRELFVSISILLPIIAIGIYPDFVLSLSVDKVEAIISNYFYQ.

14 helical membrane passes run 5–25 (FPWLTIIVLLPIFAGSLIFFL), 38–58 (ICICSLELLLTTYTFCYHFQL), 85–105 (GLSIGPILLTGFITTLATLAA), 112–130 (SRLFHFLMLAMYSGQIGSF), 135–155 (LLLFFIMWELELIPVYLLLAM), 168–188 (FILYTAGGSIFLLIGVLGIGL), 209–229 (ALEIILYIGFLIAFSVKLPII), 243–263 (HYSTCMLLAGILLKMGAYGLV), 275–295 (SIFSPWLIIVGAIQIIYAALT), 306–326 (IAYSSVSHMGFIIIGIGSITD), 331–351 (GAILQIISHGFIGAALFFLAG), 387–407 (LALPGMSGFLAELIVFFGIIT), 417–437 (ILITFVMAIGMILTPIYLLSM), and 463–483 (LFVSISILLPIIAIGIYPDFV).

This sequence belongs to the complex I subunit 4 family.

It localises to the plastid. The protein resides in the chloroplast thylakoid membrane. It carries out the reaction a plastoquinone + NADH + (n+1) H(+)(in) = a plastoquinol + NAD(+) + n H(+)(out). The catalysed reaction is a plastoquinone + NADPH + (n+1) H(+)(in) = a plastoquinol + NADP(+) + n H(+)(out). This chain is NAD(P)H-quinone oxidoreductase chain 4, chloroplastic, found in Eucalyptus globulus subsp. globulus (Tasmanian blue gum).